A 248-amino-acid chain; its full sequence is tRNA1(Val) (adenine(37)-N6)-methyltransferase (248 aa).

Belongs to the methyltransferase superfamily. tRNA (adenine-N(6)-)-methyltransferase family.

Its subcellular location is the cytoplasm. The catalysed reaction is adenosine(37) in tRNA1(Val) + S-adenosyl-L-methionine = N(6)-methyladenosine(37) in tRNA1(Val) + S-adenosyl-L-homocysteine + H(+). In terms of biological role, specifically methylates the adenine in position 37 of tRNA(1)(Val) (anticodon cmo5UAC). This Musicola paradisiaca (strain Ech703) (Dickeya paradisiaca) protein is tRNA1(Val) (adenine(37)-N6)-methyltransferase.